The sequence spans 203 residues: Peptide deformylase (203 aa).

2 residues coordinate Fe cation: Cys-130 and His-173. Glu-174 is a catalytic residue. His-177 is a binding site for Fe cation.

The protein belongs to the polypeptide deformylase family. Requires Fe(2+) as cofactor.

It carries out the reaction N-terminal N-formyl-L-methionyl-[peptide] + H2O = N-terminal L-methionyl-[peptide] + formate. Its function is as follows. Removes the formyl group from the N-terminal Met of newly synthesized proteins. Requires at least a dipeptide for an efficient rate of reaction. N-terminal L-methionine is a prerequisite for activity but the enzyme has broad specificity at other positions. The protein is Peptide deformylase of Streptococcus pneumoniae serotype 19F (strain G54).